Here is a 77-residue protein sequence, read N- to C-terminus: Neurotoxin LmNaTx21.1 (77 aa).

Positions 1–7 (LILVACL) are cleaved as a signal peptide. One can recognise an LCN-type CS-alpha/beta domain in the interval 16-76 (KDGYPVDWNN…VEIKGYGRCR (61 aa)). Cystine bridges form between Cys-26–Cys-75, Cys-30–Cys-51, Cys-37–Cys-58, and Cys-41–Cys-60.

This sequence belongs to the long (4 C-C) scorpion toxin superfamily. Sodium channel inhibitor family. Alpha subfamily. Expressed by the venom gland.

The protein resides in the secreted. Its function is as follows. Binds voltage-independently at site-3 of voltage-gated sodium channels (Nav) and inhibits the inactivation of the activated channels, thereby blocking neuronal transmission. The polypeptide is Neurotoxin LmNaTx21.1 (Lychas mucronatus (Chinese swimming scorpion)).